A 62-amino-acid chain; its full sequence is Large ribosomal subunit protein bL28 (62 aa).

Residues 1–23 (MGKQCYVTGRKASTGNRRSHALN) are disordered.

The protein belongs to the bacterial ribosomal protein bL28 family.

The sequence is that of Large ribosomal subunit protein bL28 from Staphylococcus carnosus (strain TM300).